We begin with the raw amino-acid sequence, 921 residues long: GPI ethanolamine phosphate transferase 1 (921 aa).

At 1-9 the chain is on the cytoplasmic side; that stretch reads MKNNTRFTL. Residues 10 to 30 form a helical membrane-spanning segment; that stretch reads IVVGVLFHLLYLWSIFDIYFI. The Lumenal portion of the chain corresponds to 31–457; that stretch reads SPLVHGMEQK…TTYNWRFIRT (427 aa). N-linked (GlcNAc...) asparagine glycans are attached at residues Asn90, Asn138, Asn198, Asn262, and Asn286. The helical transmembrane segment at 458-478 threads the bilayer; the sequence is IVTFGFLGWICYSFMIFLKLF. At 479-488 the chain is on the cytoplasmic side; the sequence is ILNNSQTTHP. Residues 489 to 509 traverse the membrane as a helical segment; it reads SILNISIFTSLGLILNYILFY. Topologically, residues 510–516 are lumenal; sequence QKSPLNF. The chain crosses the membrane as a helical span at residues 517-537; it reads YLYLIFPLFFWSKIFSNTAII. Residues 538–552 lie on the Cytoplasmic side of the membrane; sequence RDGVNEFFKGISKAE. A helical membrane pass occupies residues 553–573; the sequence is SVIIGLTIISIYEGIVYGFFH. Over 574 to 575 the chain is Lumenal; sequence RW. A helical membrane pass occupies residues 576–596; the sequence is ILSLILVSFAFYPLVCGVTDL. The Cytoplasmic portion of the chain corresponds to 597–599; it reads FTN. Residues 600–620 form a helical membrane-spanning segment; the sequence is LLWILTSVGLSSFTLLDAVKI. Glu621 is a topological domain (lumenal). Residues 622-642 form a helical membrane-spanning segment; the sequence is NLQQIQVAGILIVLSSAYAVM. The Cytoplasmic portion of the chain corresponds to 643–654; that stretch reads RLSQDISKYTQH. Residues 655–675 form a helical membrane-spanning segment; sequence LLSIQIFLVSGMLHFTSKSVI. At 676–684 the chain is on the lumenal side; the sequence is SLQKREGLP. The chain crosses the membrane as a helical span at residues 685-705; that stretch reads AFAQVGGWAILVISLTIMPFL. Residues 706–728 are Cytoplasmic-facing; the sequence is HYLKPNNNYQVRLLTIYLTFAPS. The helical transmembrane segment at 729-749 threads the bilayer; sequence FIILSISFEALFYFIFTAYIV. At 750 to 777 the chain is on the lumenal side; the sequence is QWLQIEKNIKVLKDEQKSDSNGIQLLRV. Residues 778 to 798 traverse the membrane as a helical segment; it reads AIIGFFLQQIAFFGTGNVASI. At 799–819 the chain is on the cytoplasmic side; sequence SSFSLDSVYRLLPVFDPFPMG. The helical transmembrane segment at 820-840 threads the bilayer; that stretch reads ALLMLKLIIPYVLLSCGLGIM. The Lumenal portion of the chain corresponds to 841 to 849; the sequence is NIQLDIKDY. The chain crosses the membrane as a helical span at residues 850 to 870; sequence TISSLIISTSDILSLNFFYLL. The Cytoplasmic portion of the chain corresponds to 871–878; the sequence is KTEGSWLD. A helical transmembrane segment spans residues 879-899; that stretch reads IGVTISNYCLAILSSLFMLIL. The Lumenal segment spans residues 900-921; sequence EIVGHQLLKNVTRATSSQKKTN. N-linked (GlcNAc...) asparagine glycosylation is present at Asn909.

This sequence belongs to the PIGG/PIGN/PIGO family. PIGN subfamily.

It is found in the endoplasmic reticulum membrane. It functions in the pathway glycolipid biosynthesis; glycosylphosphatidylinositol-anchor biosynthesis. In terms of biological role, ethanolamine phosphate transferase involved in glycosylphosphatidylinositol-anchor biosynthesis. Transfers ethanolamine phosphate to the first alpha-1,4-linked mannose of the glycosylphosphatidylinositol precursor of GPI-anchor. This chain is GPI ethanolamine phosphate transferase 1 (MCD4), found in Candida glabrata (strain ATCC 2001 / BCRC 20586 / JCM 3761 / NBRC 0622 / NRRL Y-65 / CBS 138) (Yeast).